Consider the following 530-residue polypeptide: Equilibrative nucleoside transporter 4 (530 aa).

Residues 1 to 21 are disordered; it reads MGSVGSQRLEEPSVAGTPDPG. Residues 1 to 68 lie on the Extracellular side of the membrane; the sequence is MGSVGSQRLE…DEPVPDDRYH (68 aa). A helical membrane pass occupies residues 69-89; it reads AIYFAMLLAGVGFLLPYNSFI. The Cytoplasmic portion of the chain corresponds to 90-101; that stretch reads TDVDYLHHKYPG. Residues 102–122 form a helical membrane-spanning segment; that stretch reads TSIVFDMSLTYILVALAAVLL. Residues 123–139 are Extracellular-facing; sequence NNVLVERLTLHTRITAG. Residues 140 to 160 form a helical membrane-spanning segment; the sequence is YLLALGPLLFISICDVWLQLF. The Cytoplasmic portion of the chain corresponds to 161–166; it reads SRDQAY. Residues 167-187 form a helical membrane-spanning segment; that stretch reads AINLAAVGTVAFGCTVQQSSF. Over 188-231 the chain is Extracellular; sequence YGYTGMLPKRYTQGVMTGESTAGVMISLSRILTKLLLPDERAST. Residues 232 to 252 traverse the membrane as a helical segment; sequence LIFFLVSVALELLCFLLHLLV. Topologically, residues 253 to 351 are cytoplasmic; it reads RRSRFVLFYT…LLLHRYVVAR (99 aa). The helical transmembrane segment at 352–372 threads the bilayer; that stretch reads VIWADMLSIAVTYFITLCLFP. At 373 to 381 the chain is on the extracellular side; sequence GLESEIRHC. A helical transmembrane segment spans residues 382–402; that stretch reads ILGEWLPILIMAVFNLSDFVG. At 403-416 the chain is on the cytoplasmic side; sequence KILAALPVDWRGTH. The helical transmembrane segment at 417–437 threads the bilayer; sequence LLACSCLRVVFIPLFILCVYP. Residues 438-450 are Extracellular-facing; it reads SGMPALRHPAWPC. The chain crosses the membrane as a helical span at residues 451–471; that stretch reads IFSLLMGISNGYFGSVPMILA. The Cytoplasmic segment spans residues 472–486; that stretch reads AGKVSPKQRELAGNT. A helical membrane pass occupies residues 487–509; sequence MTVSYMSGLTLGSAVAYCTYSLT. Residues 510–530 are Extracellular-facing; sequence RDAHGSCLHASTANGSILAGL. The N-linked (GlcNAc...) asparagine glycan is linked to Asn523.

It belongs to the SLC29A/ENT transporter (TC 2.A.57) family. In terms of processing, N-glycosylated. Mainly expressed in brain and skeletal muscle. In brain, expressed in cerebellum, cerebral cortex, medulla oblongata, occipital pole, frontal and temporal lobes putamen, spinal cord, substancia nigra, hippocampus, caudate nucleus, nucleus accumbens, pons and choroid plexus. Expressed in heart, in both cardiomyocytes and vascular endothelial cells. Also expressed in adrenal gland, small intestine, pancreas, kidney, liver, bone marrow, lymph node. Located in endometrial stroma, where the expression is high in the proliferative phase, decreases during the secretory phase, and is no longer detectable in the menstrual phase.

The protein resides in the cell membrane. It is found in the apical cell membrane. It carries out the reaction serotonin(out) = serotonin(in). The catalysed reaction is dopamine(out) = dopamine(in). The enzyme catalyses (R)-noradrenaline(out) = (R)-noradrenaline(in). It catalyses the reaction (R)-adrenaline(out) = (R)-adrenaline(in). It carries out the reaction histamine(out) = histamine(in). The catalysed reaction is tyramine(in) = tyramine(out). The enzyme catalyses guanidine(out) = guanidine(in). It catalyses the reaction adenosine(in) = adenosine(out). Activated at acidic pH. Its function is as follows. Electrogenic voltage-dependent transporter that mediates the transport of a variety of endogenous bioactive amines, cationic xenobiotics and drugs. Utilizes the physiologic inside-negative membrane potential as a driving force to facilitate cellular uptake of organic cations. Functions as a Na(+)- and Cl(-)-independent bidirectional transporter. Substrate transport is pH-dependent and enhanced under acidic condition, which is most likely the result of allosteric changes in the transporter structure. Implicated in monoamine neurotransmitters uptake such as serotonin, dopamine, adrenaline/epinephrine, noradrenaline/norepinephrine, histamine and tyramine, thereby supporting a role in homeostatic regulation of aminergic neurotransmission in the central nervous system. Also responsible for the uptake of bioactive amines and drugs through the blood-cerebrospinal fluid (CSF) barrier, from the CSF into choroid plexus epithelial cells, thereby playing a significant role in the clearance of cationic neurotoxins, xenobiotics and metabolic waste in the brain. Involved in bidirectional transport of the purine nucleoside adenosine and plays a role in the regulation of extracellular adenosine concentrations in cardiac tissues, in particular during ischemia. May be involved in organic cation uptake from the tubular lumen into renal tubular cells, thereby contributing to organic cation reabsorption in the kidney. Also transports guanidine. This chain is Equilibrative nucleoside transporter 4, found in Homo sapiens (Human).